A 159-amino-acid chain; its full sequence is MKAVCPGSFDPITLGHLDIITRAAAQFEEVTVLVTANPNKNSGLFTVEERMDLIRRSTAHLSNVKVDTWATLLVDYTTAHGIGALVKGLRSSLDYEYELPMAQMNRRLSGVDTFFLLTDEKYGYVSSTLCKEVARYGGDVSGLLPEVVVDAVKQKYTQQ.

S8 contributes to the substrate binding site. ATP is bound by residues 8 to 9 (SF) and H16. Substrate is bound by residues K40, L73, and K87. Residues 88 to 90 (GLR), E98, and 122 to 128 (YGYVSST) each bind ATP.

It belongs to the bacterial CoaD family. In terms of assembly, homohexamer. Mg(2+) serves as cofactor.

It localises to the cytoplasm. The enzyme catalyses (R)-4'-phosphopantetheine + ATP + H(+) = 3'-dephospho-CoA + diphosphate. It functions in the pathway cofactor biosynthesis; coenzyme A biosynthesis; CoA from (R)-pantothenate: step 4/5. Functionally, reversibly transfers an adenylyl group from ATP to 4'-phosphopantetheine, yielding dephospho-CoA (dPCoA) and pyrophosphate. In Corynebacterium efficiens (strain DSM 44549 / YS-314 / AJ 12310 / JCM 11189 / NBRC 100395), this protein is Phosphopantetheine adenylyltransferase.